A 206-amino-acid polypeptide reads, in one-letter code: Homoserine/homoserine lactone efflux protein (206 aa).

Transmembrane regions (helical) follow at residues 5–25, 45–65, 68–88, 117–137, 148–168, and 182–202; these read WWFAYLLTSIILSLSPGSGAI, GLQTGLAIHIVLVGVGLGTLF, SVIAFEVLKWAGAAYLIWLGI, FVNLTNPKSIVFLAALFPQFI, IVLGVTTIVVDIIVMIGYATL, and MKALNKIFGSLFMLVGALLAS.

The protein belongs to the Rht family.

The protein localises to the cell membrane. Functionally, conducts the efflux of homoserine and homoserine lactone. The polypeptide is Homoserine/homoserine lactone efflux protein (rhtB) (Escherichia coli O157:H7).